The following is a 128-amino-acid chain: Aspartate 1-decarboxylase (128 aa).

Residue serine 25 is the Schiff-base intermediate with substrate; via pyruvic acid of the active site. Serine 25 carries the post-translational modification Pyruvic acid (Ser). Position 57 (threonine 57) interacts with substrate. Tyrosine 58 acts as the Proton donor in catalysis. Substrate is bound at residue glycine 73–alanine 75.

Belongs to the PanD family. Heterooctamer of four alpha and four beta subunits. Requires pyruvate as cofactor. Is synthesized initially as an inactive proenzyme, which is activated by self-cleavage at a specific serine bond to produce a beta-subunit with a hydroxyl group at its C-terminus and an alpha-subunit with a pyruvoyl group at its N-terminus.

It localises to the cytoplasm. The enzyme catalyses L-aspartate + H(+) = beta-alanine + CO2. It participates in cofactor biosynthesis; (R)-pantothenate biosynthesis; beta-alanine from L-aspartate: step 1/1. Catalyzes the pyruvoyl-dependent decarboxylation of aspartate to produce beta-alanine. This Burkholderia multivorans (strain ATCC 17616 / 249) protein is Aspartate 1-decarboxylase.